Reading from the N-terminus, the 494-residue chain is Ribonuclease H (494 aa).

2 disordered regions span residues 79 to 148 and 205 to 231; these read NRRR…APPP and RSGLEKSDRGDGAASLSALSEPQVGLR. Polar residues-rich tracts occupy residues 84 to 100 and 131 to 143; these read GSTSKKAQVKSSVNQLA and PTTSRASGETRTS. The RNase H type-1 domain maps to 272 to 488; sequence SSVPQVVYVD…ADVLAVAGAR (217 aa). Mg(2+)-binding residues include Asp-281, Glu-325, Asp-374, and Asp-480.

Belongs to the RNase H family. As to quaternary structure, monomer. Requires Mg(2+) as cofactor.

The enzyme catalyses Endonucleolytic cleavage to 5'-phosphomonoester.. Functionally, endonuclease that specifically degrades the RNA of RNA-DNA hybrids. This chain is Ribonuclease H (RNH1), found in Crithidia fasciculata.